Here is a 130-residue protein sequence, read N- to C-terminus: Small ribosomal subunit protein uS8 (130 aa).

It belongs to the universal ribosomal protein uS8 family. Part of the 30S ribosomal subunit. Contacts proteins S5 and S12.

Functionally, one of the primary rRNA binding proteins, it binds directly to 16S rRNA central domain where it helps coordinate assembly of the platform of the 30S subunit. The sequence is that of Small ribosomal subunit protein uS8 from Idiomarina loihiensis (strain ATCC BAA-735 / DSM 15497 / L2-TR).